Reading from the N-terminus, the 433-residue chain is Cell division control protein KAR1 (433 aa).

Disordered stretches follow at residues 1–38 (MNVT…SINL), 69–101 (TKNI…FYNG), and 207–227 (KPLP…TLQR). Phosphothreonine is present on Thr233.

Interacts with SPC72.

The protein resides in the cytoplasm. The protein localises to the cytoskeleton. It localises to the microtubule organizing center. It is found in the spindle pole body. In terms of biological role, KAR1 is required for function of both intranuclear and extranuclear microtubules. KAR1 helps localize CDC31 to the spindle pole body (SPB), CDC31 then initiates SPB duplication via interaction with a downstream effector. In Saccharomyces cerevisiae (strain ATCC 204508 / S288c) (Baker's yeast), this protein is Cell division control protein KAR1 (KAR1).